We begin with the raw amino-acid sequence, 141 residues long: Relaxin-3 (141 aa).

A signal peptide spans 1 to 24 (MAMLGLLLLASWALLGALGLQAEA). 3 cysteine pairs are disulfide-bonded: C34/C128, C46/C141, and C127/C132. Positions 54-117 (ADILAHESLG…GSPGVVRGSR (64 aa)) are cleaved as a propeptide — connecting peptide.

This sequence belongs to the insulin family. Heterodimer of a B chain and an A chain linked by two disulfide bonds. As to expression, high expression in the brain localized to the pons/medulla with highest levels in pars ventromedialis of the dorsal tegmental nucleus. Significant expression is also detected in the spleen, thymus, lung, testis and ovary.

It is found in the secreted. May play a role in neuropeptide signaling processes. Ligand for LGR7, relaxin-3 receptor-1 and relaxin-3 receptor-2. The chain is Relaxin-3 (Rln3) from Mus musculus (Mouse).